A 266-amino-acid polypeptide reads, in one-letter code: Undecaprenyl-diphosphatase (266 aa).

The next 8 helical transmembrane spans lie at 1–21 (MEFFKYIFYGIIQGLTEFIPI), 39–59 (PGSSVSAIIQIGSVFAIFWYF), 87–107 (IFIGTIPIVFIGVIIKLFVPG), 117–137 (LSIALVSILMSLIMLFADIST), 153–173 (YIGIAQAFAIVPGVSRSGATI), 189–209 (FSFLLGIPSISLAAFVEFFSA), 216–236 (FPFLPLFAGLITAFFSSLLAI), and 246–266 (HGLKIFVYYRLIFGILILFNL).

This sequence belongs to the UppP family.

The protein resides in the cell inner membrane. The enzyme catalyses di-trans,octa-cis-undecaprenyl diphosphate + H2O = di-trans,octa-cis-undecaprenyl phosphate + phosphate + H(+). Catalyzes the dephosphorylation of undecaprenyl diphosphate (UPP). Confers resistance to bacitracin. The polypeptide is Undecaprenyl-diphosphatase (Prochlorococcus marinus subsp. pastoris (strain CCMP1986 / NIES-2087 / MED4)).